Reading from the N-terminus, the 541-residue chain is Effector protein hopAB1 (541 aa).

Disordered stretches follow at residues 1–94 (MPGI…EAQQ), 168–222 (QRAL…RHPQ), and 317–338 (RQTTTNSPELPPLASSAESGRR). Residues 18–31 (TDGEPVTEREHDSS) are compositionally biased toward basic and acidic residues. The span at 183-196 (SSSGSSQRSLIGRS) shows a compositional bias: low complexity.

It belongs to the HopAB family.

Its subcellular location is the secreted. In terms of biological role, effector protein that plays different roles depending on the species and plant cultivars that interact with the pathogen. Acts as a virulence determinant by enhancing the development of disease symptoms and bacterial growth. Acts as an avirulence factor by eliciting hypersensitive response (HR) and plant resistance. The sequence is that of Effector protein hopAB1 (hopAB1) from Pseudomonas savastanoi (Pseudomonas syringae pv. savastanoi).